A 208-amino-acid chain; its full sequence is NAD(P)H-quinone oxidoreductase subunit I (208 aa).

4Fe-4S ferredoxin-type domains are found at residues 55 to 84 and 95 to 124; these read GRIHYEFDKCIACEVCVRVCPINLPVVDWV and RNYSIDFGVCIFCGNCVEYCPTNCLSMTEE. Positions 64, 67, 70, 74, 104, 107, 110, and 114 each coordinate [4Fe-4S] cluster.

It belongs to the complex I 23 kDa subunit family. In terms of assembly, NDH-1 is composed of at least 11 different subunits. Requires [4Fe-4S] cluster as cofactor.

Its subcellular location is the cellular thylakoid membrane. The catalysed reaction is a plastoquinone + NADH + (n+1) H(+)(in) = a plastoquinol + NAD(+) + n H(+)(out). It carries out the reaction a plastoquinone + NADPH + (n+1) H(+)(in) = a plastoquinol + NADP(+) + n H(+)(out). Functionally, NDH-1 shuttles electrons from an unknown electron donor, via FMN and iron-sulfur (Fe-S) centers, to quinones in the respiratory and/or the photosynthetic chain. The immediate electron acceptor for the enzyme in this species is believed to be plastoquinone. Couples the redox reaction to proton translocation, and thus conserves the redox energy in a proton gradient. The polypeptide is NAD(P)H-quinone oxidoreductase subunit I (Prochlorococcus marinus (strain MIT 9515)).